The sequence spans 238 residues: Small heat shock protein, chloroplastic (238 aa).

Positions 31-87 (APLSTGGRTRPLSVASAAQENRDNSVDVQVSQAQNAGNQQGNAVQRRPRRAGFDISP) are disordered. Residues 58-75 (VQVSQAQNAGNQQGNAVQ) are compositionally biased toward low complexity. The 115-residue stretch at 124–238 (AARARRRMPW…ERKVIDVQVQ (115 aa)) folds into the sHSP domain.

It belongs to the small heat shock protein (HSP20) family.

Its subcellular location is the plastid. The protein resides in the chloroplast. The protein is Small heat shock protein, chloroplastic (HSP21) of Triticum aestivum (Wheat).